Reading from the N-terminus, the 618-residue chain is Paraneoplastic antigen-like protein 5 (618 aa).

The segment covering 390–399 (AGEEGQRKES) has biased composition (basic and acidic residues). 3 disordered regions span residues 390–409 (AGEEGQRKESGFWAESEPDE), 451–475 (RDTLTKSWGSPDKGTGDMSVAEGQQ), and 519–549 (SMITRPQGNPDRSWDTSGSQDGEDGCSELRM).

This sequence belongs to the PNMA family. As to expression, restricted to testis, where expression is low. Not detected in the brain.

The protein resides in the nucleus. In Mus musculus (Mouse), this protein is Paraneoplastic antigen-like protein 5 (Pnma5).